The chain runs to 356 residues: Nicotinate-nucleotide--dimethylbenzimidazole phosphoribosyltransferase (356 aa).

The active-site Proton acceptor is the glutamate 317.

This sequence belongs to the CobT family. As to quaternary structure, homodimer.

The enzyme catalyses 5,6-dimethylbenzimidazole + nicotinate beta-D-ribonucleotide = alpha-ribazole 5'-phosphate + nicotinate + H(+). The protein operates within nucleoside biosynthesis; alpha-ribazole biosynthesis; alpha-ribazole from 5,6-dimethylbenzimidazole: step 1/2. Functionally, catalyzes the synthesis of alpha-ribazole-5'-phosphate from nicotinate mononucleotide (NAMN) and 5,6-dimethylbenzimidazole (DMB). The polypeptide is Nicotinate-nucleotide--dimethylbenzimidazole phosphoribosyltransferase (Salmonella dublin (strain CT_02021853)).